Here is a 530-residue protein sequence, read N- to C-terminus: Cytochrome P450 monooxygenase ausG (530 aa).

Residues 31 to 51 (LLVAYRLPGLLLLFSITIILF) traverse the membrane as a helical segment. Cysteine 470 contributes to the heme binding site.

The protein belongs to the cytochrome P450 family. Requires heme as cofactor.

The protein localises to the membrane. Its pathway is secondary metabolite biosynthesis; terpenoid biosynthesis. Its function is as follows. Cytochrome P450 monooxygenase; part of the gene cluster B that mediates the biosynthesis of the fungal meroterpenoid acetoxydehydroaustin. The first step of the pathway is the synthesis of 3,5-dimethylorsellinic acid by the polyketide synthase ausA. 3,5-dimethylorsellinic acid is then prenylated by the polyprenyl transferase ausN. Further epoxidation by the FAD-dependent monooxygenase ausM and cyclization by the probable terpene cyclase ausL lead to the formation of protoaustinoid A. Protoaustinoid A is then oxidized to spiro-lactone preaustinoid A3 by the combined action of the FAD-binding monooxygenases ausB and ausC, and the dioxygenase ausE. Acid-catalyzed keto-rearrangement and ring contraction of the tetraketide portion of preaustinoid A3 by ausJ lead to the formation of preaustinoid A4. The aldo-keto reductase ausK, with the help of ausH, is involved in the next step by transforming preaustinoid A4 into isoaustinone which is in turn hydroxylated by the P450 monooxygenase ausI to form austinolide. The cytochrome P450 monooxygenase ausG then modifies austinolide to austinol. Austinol is further acetylated to austin by the O-acetyltransferase ausP, which spontaneously changes to dehydroaustin. The cytochrome P450 monooxygenase then converts dehydroaustin is into 7-dehydrodehydroaustin. The hydroxylation catalyzed by ausR permits the second O-acetyltransferase ausQ to add an additional acetyl group to the molecule, leading to the formation of acetoxydehydroaustin. Due to genetic rearrangements of the clusters and the subsequent loss of some enzymes, the end product of the Penicillium brasilianum austinoid biosynthesis clusters is acetoxydehydroaustin. This chain is Cytochrome P450 monooxygenase ausG, found in Penicillium brasilianum.